We begin with the raw amino-acid sequence, 491 residues long: Keratin, type I cytoskeletal 39 (491 aa).

Residues 1-96 (MDTKGCTTTN…WYGEGINSNE (96 aa)) form a head region. In terms of domain architecture, IF rod spans 96 to 407 (EKETMQILNE…SLLESSDGKR (312 aa)). Residues 97 to 131 (KETMQILNERLANYLQKVRMLERENAELESKIQEE) form a coil 1A region. The linker 1 stretch occupies residues 132 to 142 (SNKELPVLCPD). The tract at residues 143 to 243 (YLSYYTTIEE…HKEEINSLQC (101 aa)) is coil 1B. A linker 12 region spans residues 244-259 (QLGERLDIEVTAAPSA). Positions 260-403 (DLNQVLQEMR…TTYRSLLESS (144 aa)) are coil 2. The tail stretch occupies residues 404 to 491 (DGKRPCYPRA…PCFIIRPAKV (88 aa)).

This sequence belongs to the intermediate filament family. Heterotetramer of two type I and two type II keratins. As to expression, expressed in skin and scalp. In the hair follicle, it is present in the upper hair cuticle and the upper cortex. Also present in the in the upper portion of beard hairs (at protein level).

In terms of biological role, may play a role in late hair differentiation. The protein is Keratin, type I cytoskeletal 39 (KRT39) of Homo sapiens (Human).